The sequence spans 176 residues: Nucleoside triphosphate/diphosphate phosphatase (176 aa).

Arginine 23 acts as the Proton donor in catalysis. 6 residues coordinate Mg(2+): asparagine 87, aspartate 103, aspartate 105, aspartate 107, aspartate 120, and glutamate 123.

This sequence belongs to the Ntdp family. Requires Mg(2+) as cofactor.

It catalyses the reaction a ribonucleoside 5'-triphosphate + H2O = a ribonucleoside 5'-diphosphate + phosphate + H(+). The enzyme catalyses a ribonucleoside 5'-diphosphate + H2O = a ribonucleoside 5'-phosphate + phosphate + H(+). Its function is as follows. Has nucleoside phosphatase activity towards nucleoside triphosphates and nucleoside diphosphates. This Bacillus mycoides (strain KBAB4) (Bacillus weihenstephanensis) protein is Nucleoside triphosphate/diphosphate phosphatase.